A 229-amino-acid polypeptide reads, in one-letter code: Putative N-acetylmannosamine-6-phosphate 2-epimerase (229 aa).

The protein belongs to the NanE family.

It catalyses the reaction an N-acyl-D-glucosamine 6-phosphate = an N-acyl-D-mannosamine 6-phosphate. It participates in amino-sugar metabolism; N-acetylneuraminate degradation; D-fructose 6-phosphate from N-acetylneuraminate: step 3/5. In terms of biological role, converts N-acetylmannosamine-6-phosphate (ManNAc-6-P) to N-acetylglucosamine-6-phosphate (GlcNAc-6-P). This is Putative N-acetylmannosamine-6-phosphate 2-epimerase from Cutibacterium acnes (strain DSM 16379 / KPA171202) (Propionibacterium acnes).